Here is a 540-residue protein sequence, read N- to C-terminus: Eukaryotic translation initiation factor 3 subunit L (540 aa).

The 209-residue stretch at 307 to 515 folds into the PCI domain; the sequence is TFSDILLYIQ…IHIADTKVSH (209 aa).

The protein belongs to the eIF-3 subunit L family. Component of the eukaryotic translation initiation factor 3 (eIF-3) complex. The eIF-3 complex interacts with pix.

It is found in the cytoplasm. In terms of biological role, component of the eukaryotic translation initiation factor 3 (eIF-3) complex, which is involved in protein synthesis of a specialized repertoire of mRNAs and, together with other initiation factors, stimulates binding of mRNA and methionyl-tRNAi to the 40S ribosome. The eIF-3 complex specifically targets and initiates translation of a subset of mRNAs involved in cell proliferation. The chain is Eukaryotic translation initiation factor 3 subunit L from Drosophila grimshawi (Hawaiian fruit fly).